A 346-amino-acid chain; its full sequence is Phenylalanine--tRNA ligase alpha subunit (346 aa).

Glu261 provides a ligand contact to Mg(2+).

It belongs to the class-II aminoacyl-tRNA synthetase family. Phe-tRNA synthetase alpha subunit type 1 subfamily. As to quaternary structure, tetramer of two alpha and two beta subunits. Mg(2+) serves as cofactor.

It is found in the cytoplasm. It catalyses the reaction tRNA(Phe) + L-phenylalanine + ATP = L-phenylalanyl-tRNA(Phe) + AMP + diphosphate + H(+). This is Phenylalanine--tRNA ligase alpha subunit from Dehalococcoides mccartyi (strain ATCC BAA-2100 / JCM 16839 / KCTC 5957 / BAV1).